The primary structure comprises 249 residues: Enolase-phosphatase E1 (249 aa).

The Mg(2+) site is built by D14 and E16. Residues 141–142 (SS) and K175 contribute to the substrate site. A Mg(2+)-binding site is contributed by D200.

It belongs to the HAD-like hydrolase superfamily. MasA/MtnC family. Monomer. The cofactor is Mg(2+).

It is found in the cytoplasm. Its subcellular location is the nucleus. The catalysed reaction is 5-methylsulfanyl-2,3-dioxopentyl phosphate + H2O = 1,2-dihydroxy-5-(methylsulfanyl)pent-1-en-3-one + phosphate. It functions in the pathway amino-acid biosynthesis; L-methionine biosynthesis via salvage pathway; L-methionine from S-methyl-5-thio-alpha-D-ribose 1-phosphate: step 3/6. Its pathway is amino-acid biosynthesis; L-methionine biosynthesis via salvage pathway; L-methionine from S-methyl-5-thio-alpha-D-ribose 1-phosphate: step 4/6. Bifunctional enzyme that catalyzes the enolization of 2,3-diketo-5-methylthiopentyl-1-phosphate (DK-MTP-1-P) into the intermediate 2-hydroxy-3-keto-5-methylthiopentenyl-1-phosphate (HK-MTPenyl-1-P), which is then dephosphorylated to form the acireductone 1,2-dihydroxy-3-keto-5-methylthiopentene (DHK-MTPene). This chain is Enolase-phosphatase E1, found in Drosophila mojavensis (Fruit fly).